Reading from the N-terminus, the 350-residue chain is MLRQIKPRNARSKRALEKRAPKIVENPKTCLFLRGTTCSQITQDAMNDLYAMRQVHAKRFHKKNAIHPFEDATSLCFFSEKNDCSLMVFGSSNKKRPHTLTFVRMFDYKVLDMLEFYLDPDTYRSISQFKTSKIPIGMRPMMVFAGTAFESPVPNAFTMAKSMLIDFFRGEPSDKIDVEGLRFVVVVTADEPTSSTSTNNDGENPAPLPGMTDPRSIDPSQKPILRLRVYGIRTKRSGTRLPRVEVEEHGPRMDFRLGRMREPDPAMLKEAMKKAKTPQEERTKKNISMDLLGDKIGRIHMGKTDLSKLQTRKMKGLKRGRDEDEGGEDDRTDVVEAGSGEKKKKKKVKG.

In terms of domain architecture, Brix spans 28–266; that stretch reads KTCLFLRGTT…LGRMREPDPA (239 aa). The segment covering 192 to 202 has biased composition (polar residues); that stretch reads PTSSTSTNNDG. 2 disordered regions span residues 192–219 and 301–350; these read PTSSTSTNNDGENPAPLPGMTDPRSIDP and MGKT…KVKG.

The protein belongs to the RPF2 family. As to quaternary structure, component of a hexameric 5S RNP precursor complex, composed of 5S RNA, RRS1, RPF2, RPL5, RPL11 and SYO1; this complex acts as a precursor for ribosome assembly.

The protein localises to the nucleus. It localises to the nucleolus. In terms of biological role, involved in ribosomal large subunit assembly. This Chaetomium thermophilum (strain DSM 1495 / CBS 144.50 / IMI 039719) (Thermochaetoides thermophila) protein is Ribosome production factor 2 homolog.